The primary structure comprises 163 residues: HTH-type transcriptional regulator IscR (163 aa).

Residues 2–131 enclose the HTH rrf2-type domain; that stretch reads RLTSKGRYAV…NNITLGELVN (130 aa). A DNA-binding region (H-T-H motif) is located at residues 28–51; that stretch reads LADISERQGISLSYLEQLFSRLRK. [2Fe-2S] cluster is bound by residues cysteine 92, cysteine 98, and cysteine 104.

[2Fe-2S] cluster serves as cofactor.

Regulates the transcription of several operons and genes involved in the biogenesis of Fe-S clusters and Fe-S-containing proteins. The chain is HTH-type transcriptional regulator IscR from Enterobacter sp. (strain 638).